A 260-amino-acid polypeptide reads, in one-letter code: Exosome complex component Rrp42 (260 aa).

This sequence belongs to the RNase PH family. Rrp42 subfamily. Component of the archaeal exosome complex. Forms a hexameric ring-like arrangement composed of 3 Rrp41-Rrp42 heterodimers. The hexameric ring associates with a trimer of Rrp4 and/or Csl4 subunits.

The protein localises to the cytoplasm. Functionally, non-catalytic component of the exosome, which is a complex involved in RNA degradation. Contributes to the structuring of the Rrp41 active site. This is Exosome complex component Rrp42 from Thermoplasma acidophilum (strain ATCC 25905 / DSM 1728 / JCM 9062 / NBRC 15155 / AMRC-C165).